The primary structure comprises 281 residues: 4-diphosphocytidyl-2-C-methyl-D-erythritol kinase (281 aa).

Active-site residues include Lys-11 and Asp-138.

It belongs to the GHMP kinase family. IspE subfamily.

The catalysed reaction is 4-CDP-2-C-methyl-D-erythritol + ATP = 4-CDP-2-C-methyl-D-erythritol 2-phosphate + ADP + H(+). It functions in the pathway isoprenoid biosynthesis; isopentenyl diphosphate biosynthesis via DXP pathway; isopentenyl diphosphate from 1-deoxy-D-xylulose 5-phosphate: step 3/6. Its function is as follows. Catalyzes the phosphorylation of the position 2 hydroxy group of 4-diphosphocytidyl-2C-methyl-D-erythritol. The chain is 4-diphosphocytidyl-2-C-methyl-D-erythritol kinase from Pelagibacter ubique (strain HTCC1062).